Consider the following 232-residue polypeptide: Flagellar L-ring protein (232 aa).

An N-terminal signal peptide occupies residues 1-15 (MKKVLFYVLPFAFFG). The N-palmitoyl cysteine moiety is linked to residue cysteine 16. Cysteine 16 is lipidated: S-diacylglycerol cysteine.

The protein belongs to the FlgH family. The basal body constitutes a major portion of the flagellar organelle and consists of four rings (L,P,S, and M) mounted on a central rod.

It localises to the cell outer membrane. Its subcellular location is the bacterial flagellum basal body. Assembles around the rod to form the L-ring and probably protects the motor/basal body from shearing forces during rotation. In Campylobacter jejuni subsp. jejuni serotype O:6 (strain 81116 / NCTC 11828), this protein is Flagellar L-ring protein.